We begin with the raw amino-acid sequence, 315 residues long: Non-structural protein 2 (315 aa).

ATP contacts are provided by residues 106-108, Lys-187, and 220-222; these read SVR and HGK. Residues 204–240 form an RNA-binding region; it reads LVAELRWQYNKFAVITHGKGHYRVVRYSTVANHADRV. The For NTPase and RTPase activities role is filled by His-224. Arg-226 lines the ATP pocket.

Belongs to the rotavirus NSP2 family. As to quaternary structure, homooctamer. Interacts with VP1; this interaction is weak. Interacts with NSP5; this interaction leads to up-regulation of NSP5 phosphorylation and formation of viral factories. Interacts with host DCP1A, DCP1B, DDX6, EDC4 and EIF2S1/eIF2-alpha; these interactions are probably part of the sequestration of some host SGs and PBs proteins in viral factories. Mg(2+) serves as cofactor.

It is found in the host cytoplasm. Its function is as follows. Participates in replication and packaging of the viral genome. Plays a crucial role, together with NSP5, in the formation of virus factories (viroplasms), which are large inclusions in the host cytoplasm where replication intermediates are assembled and viral RNA replication takes place. Displays ssRNA binding, NTPase, RNA triphosphatase (RTPase) and ATP-independent helix-unwinding activities. The unwinding activity may prepare and organize plus-strand RNAs for packaging and replication by removing interfering secondary structures. The RTPase activity plays a role in the removal of the gamma-phosphate from the rotavirus RNA minus strands of dsRNA genome segments. Participates in the selective exclusion of host proteins from stress granules (SG) and P bodies (PB). Also participates in the sequestration of these remodeled organelles in viral factories. The sequence is that of Non-structural protein 2 from Aves (RV-A).